We begin with the raw amino-acid sequence, 331 residues long: 6-phosphogluconolactonase (331 aa).

The protein belongs to the cycloisomerase 2 family.

It catalyses the reaction 6-phospho-D-glucono-1,5-lactone + H2O = 6-phospho-D-gluconate + H(+). It functions in the pathway carbohydrate degradation; pentose phosphate pathway; D-ribulose 5-phosphate from D-glucose 6-phosphate (oxidative stage): step 2/3. Catalyzes the hydrolysis of 6-phosphogluconolactone to 6-phosphogluconate. This is 6-phosphogluconolactonase from Buchnera aphidicola subsp. Baizongia pistaciae (strain Bp).